We begin with the raw amino-acid sequence, 208 residues long: WEB family protein At2g17940 (208 aa).

The stretch at 78 to 113 (RTLQLNTSLSNRIKTLTQELELGKKEIQRLSRTRSS) forms a coiled coil.

Belongs to the WEB family.

The protein is WEB family protein At2g17940 of Arabidopsis thaliana (Mouse-ear cress).